Here is a 239-residue protein sequence, read N- to C-terminus: tRNA (guanine-N(1)-)-methyltransferase (239 aa).

S-adenosyl-L-methionine contacts are provided by residues G115 and 134–139 (MGDFVL). The segment at 210 to 239 (QQQREQRTQERRPDLWNRWQQIQNPTPPAP) is disordered. Positions 211–224 (QQREQRTQERRPDL) are enriched in basic and acidic residues.

Belongs to the RNA methyltransferase TrmD family. As to quaternary structure, homodimer.

Its subcellular location is the cytoplasm. It carries out the reaction guanosine(37) in tRNA + S-adenosyl-L-methionine = N(1)-methylguanosine(37) in tRNA + S-adenosyl-L-homocysteine + H(+). In terms of biological role, specifically methylates guanosine-37 in various tRNAs. This Synechococcus sp. (strain CC9311) protein is tRNA (guanine-N(1)-)-methyltransferase.